Consider the following 141-residue polypeptide: Hemoglobin subunit alpha-A (141 aa).

Residues 1-141 (VLSAADKTNV…VGTVLTAKYR (141 aa)) enclose the Globin domain. Residue histidine 58 participates in O2 binding. Residue histidine 87 participates in heme b binding.

Belongs to the globin family. Heterotetramer of two alpha chains and two beta chains. As to expression, red blood cells.

Functionally, involved in oxygen transport from the lung to the various peripheral tissues. This Turdus merula (Common blackbird) protein is Hemoglobin subunit alpha-A (HBAA).